We begin with the raw amino-acid sequence, 418 residues long: Gamma-glutamyl phosphate reductase (418 aa).

Belongs to the gamma-glutamyl phosphate reductase family.

The protein localises to the cytoplasm. It catalyses the reaction L-glutamate 5-semialdehyde + phosphate + NADP(+) = L-glutamyl 5-phosphate + NADPH + H(+). Its pathway is amino-acid biosynthesis; L-proline biosynthesis; L-glutamate 5-semialdehyde from L-glutamate: step 2/2. Its function is as follows. Catalyzes the NADPH-dependent reduction of L-glutamate 5-phosphate into L-glutamate 5-semialdehyde and phosphate. The product spontaneously undergoes cyclization to form 1-pyrroline-5-carboxylate. The protein is Gamma-glutamyl phosphate reductase of Clostridium kluyveri (strain NBRC 12016).